Consider the following 76-residue polypeptide: Kappa-actitoxin-Avd4l (76 aa).

An N-terminal signal peptide occupies residues 1 to 19 (MNKALFLCLVVLCAAVVFA). Positions 20 to 31 (AEDLQKAKHAPF) are excised as a propeptide. Intrachain disulfides connect cysteine 37/cysteine 72, cysteine 39/cysteine 65, and cysteine 55/cysteine 73.

It belongs to the sea anemone type 3 (BDS) potassium channel toxin family. As to expression, weakly expressed in the ectodermal tissue from the distal and proximal tentacles, body wall, and oral disk.

It localises to the secreted. Its subcellular location is the nematocyst. In terms of biological role, blocks Kv3 voltage-gated potassium channels. Reduces blood pressure. The polypeptide is Kappa-actitoxin-Avd4l (Anemonia viridis (Snakelocks anemone)).